A 1447-amino-acid polypeptide reads, in one-letter code: Netrin receptor DCC (1447 aa).

Residues 1-25 (MENSLGCVWVPKLAFVLFGASLLSA) form the signal peptide. The Extracellular segment spans residues 26–1097 (HLQVTGFQIK…GSVTPQKNSN (1072 aa)). Ig-like C2-type domains are found at residues 36-135 (PFTS…AKVT), 139-229 (PLRF…AEVR), 234-326 (PGLH…AELT), and 331-416 (PWFL…AQLI). 2 N-linked (GlcNAc...) asparagine glycosylation sites follow: N60 and N94. 3 disulfide bridges follow: C61/C117, C161/C212, and C261/C310. Residues N299 and N318 are each glycosylated (N-linked (GlcNAc...) asparagine). An intrachain disulfide couples C352 to C400. Fibronectin type-III domains follow at residues 431 to 524 (APRD…TQPE), 530 to 620 (PVEN…TLSD), 625 to 718 (PPQN…TPEN), 728 to 821 (QPSS…TDPT), 846 to 942 (PPVG…TYEA), and 947 to 1044 (APKD…TLKV). N478 is a glycosylation site (N-linked (GlcNAc...) asparagine). N628 and N702 each carry an N-linked (GlcNAc...) asparagine glycan. Residues 1098–1122 (LLVITVVTVGVLTVLVVVIVAVICT) form a helical membrane-spanning segment. The Cytoplasmic segment spans residues 1123 to 1447 (RRSSAQQRKK…QLNAITGSAF (325 aa)). Disordered regions lie at residues 1126 to 1153 (SAQQ…PPDL) and 1166 to 1220 (EKPT…MSTL). The span at 1129–1143 (QRKKRATHSVSKRKG) shows a compositional bias: basic residues. Positions 1144–1153 (SQKDLRPPDL) are enriched in basic and acidic residues. At S1178 the chain carries Phosphoserine; by MAPK1. Over residues 1179–1220 (PIQSCQDLTPVSHSQSETQMGSKSASHSGQDTEDAGSSMSTL) the composition is skewed to polar residues. T1187 is subject to Phosphothreonine; by MAPK1. The residue at position 1267 (S1267) is a Phosphoserine; by MAPK1. Disordered stretches follow at residues 1291–1329 (RGFG…APSR) and 1394–1419 (LLPV…PASV). Positions 1297-1311 (RTQSVSEGPTTQQQP) are enriched in polar residues.

Belongs to the immunoglobulin superfamily. DCC family. As to quaternary structure, interacts with the cytoplasmic part of UNC5A, UNC5B, UNC5C and probably UNC5D. Interacts with MAPK1. Interacts with NTN1. Interacts with DSCAM. Interacts with PTK2/FAK1. Interacts with MYO10. Interacts with CBLN4; this interaction can be competed by NTN1. Interacts with SIAH1 and SIAH2. Ubiquitinated; mediated by SIAH1 or SIAH2 and leading to its subsequent proteasomal degradation. In terms of tissue distribution, in the embryo, expressed at high levels in the developing brain and neural tube. In the embryo, expressed in developing neurons of the telencephalic cortical plate and in developing brainstem nuclei. In adult, highly expressed in brain with very low levels found in testis, heart and thymus. Isoform C is expressed only in the embryo.

Its subcellular location is the membrane. In terms of biological role, receptor for netrin required for axon guidance. Mediates axon attraction of neuronal growth cones in the developing nervous system upon ligand binding. Its association with UNC5 proteins may trigger signaling for axon repulsion. It also acts as a dependence receptor required for apoptosis induction when not associated with netrin ligand. Implicated as a tumor suppressor gene. The chain is Netrin receptor DCC (Dcc) from Mus musculus (Mouse).